Consider the following 81-residue polypeptide: Exodeoxyribonuclease 7 small subunit (81 aa).

Belongs to the XseB family. As to quaternary structure, heterooligomer composed of large and small subunits.

The protein resides in the cytoplasm. The catalysed reaction is Exonucleolytic cleavage in either 5'- to 3'- or 3'- to 5'-direction to yield nucleoside 5'-phosphates.. Bidirectionally degrades single-stranded DNA into large acid-insoluble oligonucleotides, which are then degraded further into small acid-soluble oligonucleotides. This Paramagnetospirillum magneticum (strain ATCC 700264 / AMB-1) (Magnetospirillum magneticum) protein is Exodeoxyribonuclease 7 small subunit.